Here is a 129-residue protein sequence, read N- to C-terminus: Ribosome-binding factor A (129 aa).

This sequence belongs to the RbfA family. As to quaternary structure, monomer. Binds 30S ribosomal subunits, but not 50S ribosomal subunits or 70S ribosomes.

The protein localises to the cytoplasm. In terms of biological role, one of several proteins that assist in the late maturation steps of the functional core of the 30S ribosomal subunit. Associates with free 30S ribosomal subunits (but not with 30S subunits that are part of 70S ribosomes or polysomes). Required for efficient processing of 16S rRNA. May interact with the 5'-terminal helix region of 16S rRNA. The sequence is that of Ribosome-binding factor A from Azotobacter vinelandii (strain DJ / ATCC BAA-1303).